The chain runs to 895 residues: Serine/threonine-protein kinase-like protein ACR4 (895 aa).

The signal sequence occupies residues 1-29; the sequence is MRMFETRAREWILLVKLVLFTSIWQLASA. The Extracellular portion of the chain corresponds to 30-434; that stretch reads LGSMSSIAIS…FWSLQLPIAT (405 aa). Repeat copies occupy residues 38 to 73, 77 to 112, 130 to 167, 169 to 202, 210 to 245, 262 to 296, and 301 to 339. The segment at 38–339 is 7 X 36 AA repeats; that stretch reads ISYGEGGSVF…PASIPLAVSP (302 aa). Residues Asn158 and Asn196 are each glycosylated (N-linked (GlcNAc...) asparagine). Asn290 carries N-linked (GlcNAc...) asparagine glycosylation. The stretch at 346 to 395 is one TNFR-Cys repeat; it reads PCPPGTHELSNQENSPCKFTGSHICLPCSTSCPPGMYQKSVCTERSDQVC. 3 cysteine pairs are disulfide-bonded: Cys347-Cys370, Cys373-Cys387, and Cys377-Cys395. Asn398 and Asn410 each carry an N-linked (GlcNAc...) asparagine glycan. The helical transmembrane segment at 435–455 threads the bilayer; it reads AEIGFALFLVAVVSITAALYI. The Cytoplasmic segment spans residues 456–895; that stretch reads RYRLRNCRCS…GQSLFLHHNF (440 aa). A Phosphoserine modification is found at Ser475. The 278-residue stretch at 512 to 789 folds into the Protein kinase domain; that stretch reads FKEESIVGKG…KVTTALERAL (278 aa). Residues 518–526 and Lys540 each bind ATP; that span reads VGKGSFSCV. The Proton acceptor role is filled by Asp641. The disordered stretch occupies residues 818–895; it reads SWRIGSKRSG…GQSLFLHHNF (78 aa). Over residues 865–877 the composition is skewed to basic and acidic residues; it reads EGRKQQEALRSLE.

This sequence belongs to the protein kinase superfamily. Ser/Thr protein kinase family. As to quaternary structure, homodimer. Interacts with PP2A3. In terms of processing, autophosphorylated and phosphorylated by ALE2. Expressed in seedlings, floral buds, siliques, leaves, shoot apical meristems (SAM), and, to a lower extent, in roots.

The protein localises to the cell membrane. It is found in the endosome. Its subcellular location is the multivesicular body membrane. It catalyses the reaction L-seryl-[protein] + ATP = O-phospho-L-seryl-[protein] + ADP + H(+). It carries out the reaction L-threonyl-[protein] + ATP = O-phospho-L-threonyl-[protein] + ADP + H(+). Its function is as follows. Controls formative cell division in meristems, including root tips and lateral root initiation zones of the pericycle, in response to CLE40 signal. Acts with CLE40p peptide as a ligand-receptor pair in a signal transduction pathway, coordinating movement of the root tip and organization of cell divisions in the root meristem. Required during embryogenesis and development, probably for the differentiation of protoderm and epidermal cells. Involved in the regulation of cellular organization during the development of sepal margins and ovule integument outgrowth and promotes giant cell formation. Can phosphorylate ALE2. The sequence is that of Serine/threonine-protein kinase-like protein ACR4 from Arabidopsis thaliana (Mouse-ear cress).